A 427-amino-acid polypeptide reads, in one-letter code: UPF0597 protein CD630_32320 (427 aa).

It belongs to the UPF0597 family.

The sequence is that of UPF0597 protein CD630_32320 from Clostridioides difficile (strain 630) (Peptoclostridium difficile).